Reading from the N-terminus, the 476-residue chain is Aspartyl/glutamyl-tRNA(Asn/Gln) amidotransferase subunit B (476 aa).

This sequence belongs to the GatB/GatE family. GatB subfamily. In terms of assembly, heterotrimer of A, B and C subunits.

The catalysed reaction is L-glutamyl-tRNA(Gln) + L-glutamine + ATP + H2O = L-glutaminyl-tRNA(Gln) + L-glutamate + ADP + phosphate + H(+). It carries out the reaction L-aspartyl-tRNA(Asn) + L-glutamine + ATP + H2O = L-asparaginyl-tRNA(Asn) + L-glutamate + ADP + phosphate + 2 H(+). Functionally, allows the formation of correctly charged Asn-tRNA(Asn) or Gln-tRNA(Gln) through the transamidation of misacylated Asp-tRNA(Asn) or Glu-tRNA(Gln) in organisms which lack either or both of asparaginyl-tRNA or glutaminyl-tRNA synthetases. The reaction takes place in the presence of glutamine and ATP through an activated phospho-Asp-tRNA(Asn) or phospho-Glu-tRNA(Gln). The polypeptide is Aspartyl/glutamyl-tRNA(Asn/Gln) amidotransferase subunit B (Clostridium botulinum (strain Alaska E43 / Type E3)).